The following is a 231-amino-acid chain: LexA repressor (231 aa).

The H-T-H motif DNA-binding region spans 26-46 (FDEMKLALDLRSKSGIHRLIT). The disordered stretch occupies residues 79-98 (VGFQPRVIDGDRPDRPRPAN). Positions 86-95 (IDGDRPDRPR) are enriched in basic and acidic residues. Residues Ser152 and Lys190 each act as for autocatalytic cleavage activity in the active site.

Belongs to the peptidase S24 family. Homodimer.

The catalysed reaction is Hydrolysis of Ala-|-Gly bond in repressor LexA.. In terms of biological role, represses a number of genes involved in the response to DNA damage (SOS response), including recA and lexA. In the presence of single-stranded DNA, RecA interacts with LexA causing an autocatalytic cleavage which disrupts the DNA-binding part of LexA, leading to derepression of the SOS regulon and eventually DNA repair. The sequence is that of LexA repressor from Ruegeria pomeroyi (strain ATCC 700808 / DSM 15171 / DSS-3) (Silicibacter pomeroyi).